Reading from the N-terminus, the 166-residue chain is Phospholipase A2 inhibitor (166 aa).

The N-terminal stretch at 1–19 (MRLILLSGLLLLGIFLANG) is a signal peptide. A C-type lectin domain is found at 46 to 161 (LKGSFLIVHK…CDDNLLVVCE (116 aa)). 2 cysteine pairs are disulfide-bonded: Cys83–Cys160 and Cys138–Cys152. Asn122 is a glycosylation site (N-linked (GlcNAc...) asparagine).

This sequence belongs to the alpha-type phospholipase A2 inhibitor family. Homotrimer; non-covalently linked. Expressed by the liver.

The protein localises to the secreted. This phospholipase A2 inhibitor binds directly phospholipase A2 in the presence or absence of calcium. The polypeptide is Phospholipase A2 inhibitor (Bothrops jararacussu (Jararacussu)).